The primary structure comprises 38 residues: Large ribosomal subunit protein bL36B (38 aa).

It belongs to the bacterial ribosomal protein bL36 family.

This chain is Large ribosomal subunit protein bL36B, found in Prochlorococcus marinus (strain MIT 9515).